We begin with the raw amino-acid sequence, 629 residues long: Probable alpha-L-arabinofuranosidase A (629 aa).

The signal sequence occupies residues 1–25 (MVALSTLSGLSALPFLFSLVQNVYG). N-linked (GlcNAc...) asparagine glycosylation is found at Asn-36, Asn-51, Asn-140, Asn-152, Asn-168, Asn-171, Asn-260, Asn-494, and Asn-534.

This sequence belongs to the glycosyl hydrolase 51 family.

The protein localises to the secreted. The catalysed reaction is Hydrolysis of terminal non-reducing alpha-L-arabinofuranoside residues in alpha-L-arabinosides.. It functions in the pathway glycan metabolism; L-arabinan degradation. Functionally, alpha-L-arabinofuranosidase involved in the degradation of arabinoxylan, a major component of plant hemicellulose. Acts only on small linear 1,5-alpha-linked L-arabinofuranosyl oligosaccharides. The chain is Probable alpha-L-arabinofuranosidase A (abfA) from Aspergillus flavus (strain ATCC 200026 / FGSC A1120 / IAM 13836 / NRRL 3357 / JCM 12722 / SRRC 167).